Consider the following 483-residue polypeptide: FK506-binding protein 4 (483 aa).

Disordered stretches follow at residues 41–171 (TAEP…EEFV) and 208–371 (TGNY…LKKP). Residues 68-93 (EEDDDEYLDIDGEDSEDDEESDDEEV) are compositionally biased toward acidic residues. Composition is skewed to basic and acidic residues over residues 108 to 121 (REAAIKKLLEATKE) and 130 to 150 (ADAKPNGKGKKDSKGKAKASE). Composition is skewed to acidic residues over residues 151 to 167 (SDDEKSDEDDEEGEPNF), 216 to 233 (GQDEEDDEDEEDYSDEEY), and 241 to 256 (LESDSDYESDELDEID). Basic and acidic residues-rich tracts occupy residues 298-309 (LVAKDKKQAEKQ), 323-344 (ENKDVKKEGKSDKKVQFAKDLE), and 351-370 (AKDKLEKKEEKKDDKADLKK). Positions 397 to 483 (GDRVSLRYIG…VFDIKLLEIK (87 aa)) constitute a PPIase FKBP-type domain.

The protein belongs to the FKBP-type PPIase family. FKBP3/4 subfamily. In terms of assembly, binds to histones H3 and H4.

It localises to the nucleus. It catalyses the reaction [protein]-peptidylproline (omega=180) = [protein]-peptidylproline (omega=0). Functionally, PPIase that acts as a histone chaperone. Histone proline isomerase that increases the rate of cis-trans isomerization at prolines on the histone H3 N-terminal tail. Proline isomerization influences H3 methylation thereby regulating gene expression. This chain is FK506-binding protein 4 (FPR4), found in Chaetomium thermophilum (strain DSM 1495 / CBS 144.50 / IMI 039719) (Thermochaetoides thermophila).